Here is a 179-residue protein sequence, read N- to C-terminus: SCAN domain-containing protein 1 (179 aa).

The tract at residues 1–104 is disordered; that stretch reads MAATEPILAA…PGPAGSRLGP (104 aa). The segment covering 52–80 has biased composition (low complexity); the sequence is SPNAAVPEAIPTPRAAASAALELPLGPAP. One can recognise an SCAN box domain in the interval 108–166; that stretch reads RQRFRQFRYQDAAGPREAFRQLRELSRQWLRPDIRTKEQIVEMLVQEQLLAILPEAARA.

Interacts with ZNF202.

The protein localises to the nucleus. In terms of biological role, may regulate transcriptional activity. This chain is SCAN domain-containing protein 1 (SCAND1), found in Homo sapiens (Human).